The sequence spans 150 residues: NADH-quinone oxidoreductase subunit A (150 aa).

A run of 3 helical transmembrane segments spans residues 14–34 (FAVF…GAFF), 66–86 (FYLV…LYAW), and 96–116 (IGFI…VYLV).

The protein belongs to the complex I subunit 3 family. In terms of assembly, NDH-1 is composed of 13 different subunits. Subunits NuoA, H, J, K, L, M, N constitute the membrane sector of the complex.

It localises to the cell inner membrane. The catalysed reaction is a quinone + NADH + 5 H(+)(in) = a quinol + NAD(+) + 4 H(+)(out). Functionally, NDH-1 shuttles electrons from NADH, via FMN and iron-sulfur (Fe-S) centers, to quinones in the respiratory chain. The immediate electron acceptor for the enzyme in this species is believed to be ubiquinone. Couples the redox reaction to proton translocation (for every two electrons transferred, four hydrogen ions are translocated across the cytoplasmic membrane), and thus conserves the redox energy in a proton gradient. The protein is NADH-quinone oxidoreductase subunit A of Yersinia enterocolitica serotype O:8 / biotype 1B (strain NCTC 13174 / 8081).